A 384-amino-acid chain; its full sequence is Ribonucleoside-diphosphate reductase small chain (384 aa).

Residues Asp130, Glu161, and His164 each coordinate Fe cation. Tyr168 is an active-site residue. Positions 224, 258, and 261 each coordinate Fe cation.

It belongs to the ribonucleoside diphosphate reductase small chain family. Heterodimer of a large and a small subunit. Requires Fe cation as cofactor.

It catalyses the reaction a 2'-deoxyribonucleoside 5'-diphosphate + [thioredoxin]-disulfide + H2O = a ribonucleoside 5'-diphosphate + [thioredoxin]-dithiol. In terms of biological role, provides the precursors necessary for DNA synthesis. Catalyzes the biosynthesis of deoxyribonucleotides from the corresponding ribonucleotides. This Spisula solidissima (Atlantic surf-clam) protein is Ribonucleoside-diphosphate reductase small chain.